Here is a 1915-residue protein sequence, read N- to C-terminus: Cysteine repeat modular protein 2 (1915 aa).

The N-terminal stretch at 1–23 is a signal peptide; sequence MKFKKELINILALIFVLKKNIFA. FU repeat units follow at residues 53–98, 104–151, 161–208, 210–263, and 267–315; these read LGLC…QTYV, SCIC…GYTQ, QLLC…LQYK, NGIC…GYVV, and TQRC…GNYQ. N-linked (GlcNAc...) asparagine glycosylation is present at Asn138. Residues Asn274, Asn279, and Asn316 are each glycosylated (N-linked (GlcNAc...) asparagine). FU repeat units follow at residues 317 to 362, 373 to 422, 427 to 492, 496 to 546, and 554 to 602; these read SSLC…GFYT, QPIC…QTYY, TRSC…GFYQ, NNSC…SQNN, and TQAC…GTYM. Asn409 carries an N-linked (GlcNAc...) asparagine glycan. Residues Asn496, Asn572, Asn603, and Asn621 are each glycosylated (N-linked (GlcNAc...) asparagine). FU repeat units lie at residues 606–639, 640–686, and 690–739; these read TNQC…LQQN, YNVC…GFYV, and QQAC…NECL. Asn742 carries an N-linked (GlcNAc...) asparagine glycan. 2 FU repeats span residues 760–814 and 818–865; these read DGQC…GFYY and NKQC…GYYQ. N-linked (GlcNAc...) asparagine glycosylation is found at Asn909, Asn930, Asn1051, Asn1085, and Asn1193. The region spanning 1184–1224 is the EGF-like domain; that stretch reads VQIPCDSNINCSGNGKCLWSQDNYNEILCICNINYAGRYCE. Cystine bridges form between Cys1188/Cys1200, Cys1194/Cys1212, and Cys1214/Cys1223. Asn1250, Asn1297, Asn1519, Asn1546, Asn1554, Asn1580, and Asn1596 each carry an N-linked (GlcNAc...) asparagine glycan. 5 helical membrane-spanning segments follow: residues 1599 to 1619, 1662 to 1682, 1704 to 1724, 1763 to 1783, and 1796 to 1816; these read LLYA…ISII, YAQL…VYSL, STSV…VNLF, GLVF…ILSF, and FASF…FCFI. Asn1867 carries N-linked (GlcNAc...) asparagine glycosylation.

It is found in the membrane. Functionally, required for mucocyst secretion. This chain is Cysteine repeat modular protein 2, found in Tetrahymena thermophila (strain SB210).